A 163-amino-acid polypeptide reads, in one-letter code: SsrA-binding protein (163 aa).

A compositionally biased stretch (basic and acidic residues) spans 140 to 157; it reads RRGAIAERESKREMDRAL. A disordered region spans residues 140 to 163; that stretch reads RRGAIAERESKREMDRALARGRRR.

Belongs to the SmpB family.

It is found in the cytoplasm. Functionally, required for rescue of stalled ribosomes mediated by trans-translation. Binds to transfer-messenger RNA (tmRNA), required for stable association of tmRNA with ribosomes. tmRNA and SmpB together mimic tRNA shape, replacing the anticodon stem-loop with SmpB. tmRNA is encoded by the ssrA gene; the 2 termini fold to resemble tRNA(Ala) and it encodes a 'tag peptide', a short internal open reading frame. During trans-translation Ala-aminoacylated tmRNA acts like a tRNA, entering the A-site of stalled ribosomes, displacing the stalled mRNA. The ribosome then switches to translate the ORF on the tmRNA; the nascent peptide is terminated with the 'tag peptide' encoded by the tmRNA and targeted for degradation. The ribosome is freed to recommence translation, which seems to be the essential function of trans-translation. In Anaeromyxobacter dehalogenans (strain 2CP-C), this protein is SsrA-binding protein.